Consider the following 1036-residue polypeptide: Isoleucine--tRNA ligase (1036 aa).

Residues 46 to 56 (PFATGLPHYGH) carry the 'HIGH' region motif. Residues 589-593 (KMSKR) carry the 'KMSKS' region motif. Position 592 (Lys-592) interacts with ATP.

The protein belongs to the class-I aminoacyl-tRNA synthetase family. IleS type 2 subfamily. In terms of assembly, monomer. Requires Zn(2+) as cofactor.

The protein resides in the cytoplasm. The enzyme catalyses tRNA(Ile) + L-isoleucine + ATP = L-isoleucyl-tRNA(Ile) + AMP + diphosphate. Catalyzes the attachment of isoleucine to tRNA(Ile). As IleRS can inadvertently accommodate and process structurally similar amino acids such as valine, to avoid such errors it has two additional distinct tRNA(Ile)-dependent editing activities. One activity is designated as 'pretransfer' editing and involves the hydrolysis of activated Val-AMP. The other activity is designated 'posttransfer' editing and involves deacylation of mischarged Val-tRNA(Ile). The polypeptide is Isoleucine--tRNA ligase (Chlamydia trachomatis serovar L2b (strain UCH-1/proctitis)).